A 324-amino-acid polypeptide reads, in one-letter code: Cyclic GMP-AMP synthase CdnE03 (324 aa).

Mg(2+) is bound by residues aspartate 87 and aspartate 89. ATP contacts are provided by residues aspartate 89, 144-145 (NK), and aspartate 159. Aspartate 159 is a binding site for Mg(2+). The GTP site is built by lysine 224 and serine 243.

This sequence belongs to the CD-NTase family. E03 subfamily. Requires Mg(2+) as cofactor.

The catalysed reaction is GTP + ATP = 3',2'-cGAMP + 2 diphosphate. Activated by a virus-derived, approximately 400 nucleotide RNA (called CBASS-activating bacteriophage RNA, cabRNA) that begins in the viral terminase subunit terS and extends into terL. RNA secondary and/or tertiary structure, as well as viral infection itself, are important for CdnE activation. A much longer RNA (escaper RNA) with a different secondary structure, derived from a terS-mutated virus still binds to this protein, but does not activate its nucleotide cyclase activity. Shorter viral-derived RNAs (34 and 49 nt) with extensive predicted secondary structure also activate the enzyme, although not as well as full-length cabRNA. Cyclic nucleotide synthase (second messenger synthase) of a CBASS antivirus system. CBASS (cyclic oligonucleotide-based antiphage signaling system) provides immunity against bacteriophage. The CD-NTase protein synthesizes cyclic nucleotides in response to infection; these serve as specific second messenger signals. The signals activate a diverse range of effectors, leading to bacterial cell death and thus abortive phage infection. The effector for this system is downstream Cap15. A type I-B CBASS system. In terms of biological role, cyclic dinucleotide synthase that catalyzes the synthesis of 3',2'-cyclic GMP-AMP (cGAMP) from GTP and ATP upon activation by viral-derived cabRNA. Binds cabRNA via positive charges in its N-terminus. Its function is as follows. Protects S.aureus against phage infection. When the CBASS operon (cdnE-cap15) is introduced in S.aureus strain RN4220 there is strong protection against lytic DNA phages 80alpha-vir and phi-NM1-gamma-6 but little to no protection against phages phi-NM4-gamma-4 or phi-12-gamma-3. This is Cyclic GMP-AMP synthase CdnE03 from Staphylococcus schleiferi.